Reading from the N-terminus, the 254-residue chain is Triosephosphate isomerase 2 (254 aa).

N9–K11 contacts substrate. H96 (electrophile) is an active-site residue. E168 serves as the catalytic Proton acceptor. G174 and S212 together coordinate substrate.

Belongs to the triosephosphate isomerase family. As to quaternary structure, homodimer.

The protein localises to the cytoplasm. The enzyme catalyses D-glyceraldehyde 3-phosphate = dihydroxyacetone phosphate. It functions in the pathway polyol metabolism; glycerol degradation. Involved in the glycerol metabolism. Catalyzes stereospecifically the conversion of dihydroxyacetone phosphate (DHAP) to D-glyceraldehyde-3-phosphate (G3P). The chain is Triosephosphate isomerase 2 from Listeria innocua serovar 6a (strain ATCC BAA-680 / CLIP 11262).